The following is a 656-amino-acid chain: Receptor-type tyrosine-protein phosphatase R (656 aa).

The signal sequence occupies residues 1 to 23 (MRRAVGFPALCLLLNLHAAGCFS). A glycan (O-linked (Xyl...) (chondroitin sulfate) serine) is linked at serine 23. Over 24-226 (RNNDHFLAIR…EADKIWSKEG (203 aa)) the chain is Extracellular. Asparagine 128 carries N-linked (GlcNAc...) asparagine glycosylation. A helical transmembrane segment spans residues 227 to 247 (FYAVVIFLSIFIIIVTCLMII). Over 248-656 (YRLKERLQLS…ESRLSPETVE (409 aa)) the chain is Cytoplasmic. Residues 269–289 (HLSPIARQQAQSEAKTTHSMV) are disordered. A Phosphoserine modification is found at serine 271. Residues 274–289 (ARQQAQSEAKTTHSMV) are compositionally biased toward polar residues. A Phosphoserine; by PKA modification is found at serine 338. The 255-residue stretch at 392-646 (LQSEFMEIPM…EFVHHALCLF (255 aa)) folds into the Tyrosine-protein phosphatase domain. Substrate is bound by residues aspartate 553, 587–593 (CSAGIGR), and glutamine 631. Cysteine 587 (phosphocysteine intermediate) is an active-site residue.

This sequence belongs to the protein-tyrosine phosphatase family. Receptor class 7 subfamily. In terms of assembly, interacts with MAPKs. As to expression, expressed in the heart, brain, spleen, lung, liver, skeletal muscle, kidney and testis. Isoform alpha is expressed throughout the granular layer of the cerebellar but not within the Purkinje cells, also in the villi of the ileum and jejunum and both the villi and crypts of the duodenum. Isoform beta is expressed only in the Purkinje cells. Isoform gamma is expressed throughout the brain, the villi and crypts of the duodenum, jejunum and ileum and expressed at low levels in the proximal colon.

It localises to the cell membrane. It is found in the cytoplasm. It catalyses the reaction O-phospho-L-tyrosyl-[protein] + H2O = L-tyrosyl-[protein] + phosphate. Sequesters mitogen-activated protein kinases (MAPKs) such as MAPK1, MAPK3 and MAPK14 in the cytoplasm in an inactive form. The MAPKs bind to a dephosphorylated kinase interacting motif, phosphorylation of which by the protein kinase A complex releases the MAPKs for activation and translocation into the nucleus. Isoform gamma may have a role in patterning and cellular proliferation of skeletal elements in the precartilaginous/cartilaginous skeleton. In Mus musculus (Mouse), this protein is Receptor-type tyrosine-protein phosphatase R (Ptprr).